Reading from the N-terminus, the 210-residue chain is Probable nicotinate-nucleotide adenylyltransferase (210 aa).

It belongs to the NadD family.

The catalysed reaction is nicotinate beta-D-ribonucleotide + ATP + H(+) = deamido-NAD(+) + diphosphate. The protein operates within cofactor biosynthesis; NAD(+) biosynthesis; deamido-NAD(+) from nicotinate D-ribonucleotide: step 1/1. Catalyzes the reversible adenylation of nicotinate mononucleotide (NaMN) to nicotinic acid adenine dinucleotide (NaAD). The sequence is that of Probable nicotinate-nucleotide adenylyltransferase from Streptococcus pyogenes serotype M18 (strain MGAS8232).